We begin with the raw amino-acid sequence, 637 residues long: Interleukin-17 receptor E (637 aa).

Positions 1–23 are cleaved as a signal peptide; it reads MGSPRLAALLLSLPLLLIGLAVS. Topologically, residues 24–414 are extracellular; it reads ARVACPCLRS…VLCPDVSHRH (391 aa). Residues 87 to 134 are disordered; that stretch reads GSPSLSEESHRISIPSSAISHRGQRTKRAQPSAAEGREHLPEAGSQKC. Residues N278 and N307 are each glycosylated (N-linked (GlcNAc...) asparagine). Residues 415–435 traverse the membrane as a helical segment; the sequence is LGLLILALLALTALVGVVLVL. The Cytoplasmic segment spans residues 436-637; sequence LGRRLLPGSG…TNSPCGFSCL (202 aa). Positions 447–583 constitute an SEFIR domain; that stretch reads TRPVLLLHAA…LLRDLPRLLR (137 aa).

In terms of assembly, forms heterodimers with IL17RA; the heterodimer binds IL17C. As to expression, predominantly expressed in mucosal tissues, including trachea, lung, kidney and stomach. Highly expressed in colon epithelial cells. Also expressed in testis. Low expression, if any, in heart, liver, spleen, or brain. Among CD4 T-helper cells, expressed at high levels in Th17 cells.

Its subcellular location is the cell membrane. It is found in the secreted. The protein localises to the cytoplasm. Its function is as follows. Specific functional receptor for IL17C, signaling through the NF-kappa-B and MAPK pathways. Requires TRAF3IP2 /ACT1 for signaling. Crucial regulator in innate immunity to bacterial pathogens, such as Citrobacter rodentium. Isoform 4 and isoform 5 may be either cytoplasmic inactive or dominant active forms. Isoform 2 and isoform 3 may act as soluble decoy receptors. This Mus musculus (Mouse) protein is Interleukin-17 receptor E (Il17re).